The following is a 432-amino-acid chain: Cyclic GMP-AMP synthase (432 aa).

110-115 (QGSFQY) provides a ligand contact to GTP. Residues D129 and D131 each coordinate Mg(2+). R180 contributes to the ATP binding site. D191 contacts Mg(2+). S255 is a binding site for ATP. Residues K283, S297, and D344 each contribute to the GTP site. G432 is covalently cross-linked (Glycyl cysteine dithioester (Gly-Cys) (interchain with C-13 in Cap2)). G432 is covalently cross-linked (Glycyl cysteine dithioester (Gly-Cys) (interchain with C-493 in Cap2)). G432 participates in a covalent cross-link: Glycyl cysteine dithioester (Gly-Cys) (interchain with C-513 in Cap2). A Glycyl lysine isopeptide (Gly-Lys) (interchain with K-? in acceptor proteins) cross-link involves residue G432.

Belongs to the CD-NTase family. A02 subfamily. As to quaternary structure, a Cap2 dimer is bound on either side by a DncV monomer. The cofactor is Mg(2+). In bacteria expressing capV-dncV-cap2-cap3, this protein is conjugated to about 130 cellular proteins by Cap2, most of which are involved in metabolism; more conjugated protein is found in the absence of Cap3. Most conjugation occurs via an isopeptide bond with the epsilon-amine of Lys on the target protein, but Cys-conjugation also occurs, including to Cap2. Conjugation or deconjugation from cellular proteins does not change the DncV activity in vitro, but does so in vivo during infection. Post-translationally, (Microbial infection) During phage T4 infection is conjugated to at least 2 T4 proteins (fibritin (wac) and dexA.2).

The enzyme catalyses GTP + ATP = 3',3'-cGAMP + 2 diphosphate. Primed for activation by Cap2 which conjugates it to cellular proteins. cGAMP production is induced in phage T4 infected cells in a manner that requires Cap2 and Cap3, as well as a C-terminal Ala or Gly residue in this protein. Cyclic nucleotide synthase (second messenger synthase) of a CBASS antivirus system. CBASS (cyclic oligonucleotide-based antiphage signaling system) provides immunity against bacteriophages. The CD-NTase protein (DncV, this protein) synthesizes cyclic nucleotides in response to infection; these serve as specific second messenger signals. The signals activate a diverse range of effectors, leading to bacterial cell death and thus abortive phage infection. A type II-A(GA) CBASS system. In terms of biological role, catalyzes the synthesis of 3',3'-cyclic GMP-AMP (cGAMP) from GTP and ATP, a second messenger in cell signal transduction. Its product controls the activity of cGAMP-activated phospholipase CapV, a patatin-like lipase that is a direct cGAMP receptor encoded in the dncV operon. Functionally, protects E.coli against phage infection. When capV and dncV are introduced in E.coli MG1655 there is 1000-fold protection against phage P1; protection against other phage (T2, T4, T5, T6 and lambda-vir) requires the 2 subsequent genes (cap2 and cap3). In another paper the capV-dncV-cap2-cap3 operon gives 10(4)-10(5)-fold protection against phages lambda, T2, T4 and T6, about 1000-fold protection against P1 and 10-fold protection against T5. This Escherichia coli (strain TW11681) protein is Cyclic GMP-AMP synthase.